The chain runs to 263 residues: MLTITAIKAFNDNYIWVLQQQPHTQVYVVDPGDASVVIDYLEANQLTLAGILLTHHHNDHTGGVAELQAYSQDRLTVYGPDNEKIEGITHPLNATAQPRLTLDYMSGELQVLDVPGHTAGHIAYVIADALFCGDTLFSGGCGRLFEGTPAQMLNSLQQLAQLPADTRVYCAHEYTFSNLKFALAVNPNNRALQDYNERAIALRRQDKATIPSTIALERAINPFLRASDTEIVDSIKQHFSDLNHANLDELGGFTLLRQWKDNF.

H55, H57, D59, H60, H117, D134, and H172 together coordinate Zn(2+).

It belongs to the metallo-beta-lactamase superfamily. Glyoxalase II family. As to quaternary structure, monomer. Requires Zn(2+) as cofactor.

It carries out the reaction an S-(2-hydroxyacyl)glutathione + H2O = a 2-hydroxy carboxylate + glutathione + H(+). It functions in the pathway secondary metabolite metabolism; methylglyoxal degradation; (R)-lactate from methylglyoxal: step 2/2. In terms of biological role, thiolesterase that catalyzes the hydrolysis of S-D-lactoyl-glutathione to form glutathione and D-lactic acid. The polypeptide is Hydroxyacylglutathione hydrolase (Shewanella baltica (strain OS223)).